The chain runs to 554 residues: MSSKISSLKHKYLRKLERFPFESKEEATRVGVGGCTVGYTRGLVPLETPFSMRSVRGRKEIVVPDAPIQEEYLSSSSSGEDTDSEGFEGDLHLVIDLFVKGKEIIREAPLTIVRGRKYGLVGRNGIGKTTLLKAIRKRRFGIPRGMRIYMIKQDLIVDETVEDFAGAEAGRILNGLGFTKDMAVKNMRDLSGGWRMRAHLAKAINADPDLLLLDEPTNYLDINALSWLEGKIKELKTVIIVSHDRNFLNNTTEMILHLNDLKIDVYRGNYESFVKQRKEKTASARREYESQLLVREHMQSFIDRFRYNAKRASLVQSKIKMLAKMPTLVAPKQDPVIKFTFSSTPAQGALIEFVNVVFSYGCGKVLGGLSMKINSDSRIVVVGANGQGKSTFLKLLAGKLEATEGSIIRAPSLRVGYFAQHHIDHLRVNENVLDFMMKSYTQEEARRALASFGLSVDNQCIGTLSGGQKSRLGFAIINGLSPNLLVLDEPTNHLDMESIDALAEALGRFNGAVVCVSHDLSFISSAFREIYICEDGSIRRFYGDILEYKKGLGV.

ABC transporter domains are found at residues 89-285 (GDLH…ASAR) and 351-554 (IEFV…GLGV). ATP contacts are provided by residues 122 to 129 (GRNGIGKT) and 383 to 390 (GANGQGKS).

Belongs to the ABC transporter superfamily. ABCF family. EF3 subfamily.

The sequence is that of Probable ATP-binding cassette sub-family F member 3 homolog from Encephalitozoon cuniculi (strain GB-M1) (Microsporidian parasite).